The sequence spans 479 residues: Leucine-rich repeat-containing protein 74A (479 aa).

The segment covering 1–10 (MDDDDIEPLE) has biased composition (acidic residues). The interval 1–29 (MDDDDIEPLEYETKDETEAALAPQSSEDT) is disordered. LRR repeat units lie at residues 119–140 (TVLK…SLME), 147–167 (YLQE…RIIS), 176–197 (SLWK…LLCQ), 204–225 (RIRS…YLGQ), 232–253 (GLQS…ALCN), 260–281 (TLKK…ALGD), 288–309 (CLVY…RISK), and 316–336 (CLQV…YSLI).

In Rattus norvegicus (Rat), this protein is Leucine-rich repeat-containing protein 74A.